Consider the following 621-residue polypeptide: tRNA uridine 5-carboxymethylaminomethyl modification enzyme MnmG (621 aa).

Residue Gly9–Gly14 coordinates FAD. Position 268–282 (Gly268–Phe282) interacts with NAD(+).

Belongs to the MnmG family. In terms of assembly, homodimer. Heterotetramer of two MnmE and two MnmG subunits. The cofactor is FAD.

The protein localises to the cytoplasm. In terms of biological role, NAD-binding protein involved in the addition of a carboxymethylaminomethyl (cmnm) group at the wobble position (U34) of certain tRNAs, forming tRNA-cmnm(5)s(2)U34. The polypeptide is tRNA uridine 5-carboxymethylaminomethyl modification enzyme MnmG (Campylobacter fetus subsp. fetus (strain 82-40)).